Reading from the N-terminus, the 186-residue chain is ATP synthase subunit b, chloroplastic (186 aa).

A helical transmembrane segment spans residues 27–43 (IFETNILNLAVVLGILL).

Belongs to the ATPase B chain family. F-type ATPases have 2 components, F(1) - the catalytic core - and F(0) - the membrane proton channel. F(1) has five subunits: alpha(3), beta(3), gamma(1), delta(1), epsilon(1). F(0) has four main subunits: a(1), b(1), b'(1) and c(10-14). The alpha and beta chains form an alternating ring which encloses part of the gamma chain. F(1) is attached to F(0) by a central stalk formed by the gamma and epsilon chains, while a peripheral stalk is formed by the delta, b and b' chains.

Its subcellular location is the plastid. It is found in the chloroplast thylakoid membrane. In terms of biological role, f(1)F(0) ATP synthase produces ATP from ADP in the presence of a proton or sodium gradient. F-type ATPases consist of two structural domains, F(1) containing the extramembraneous catalytic core and F(0) containing the membrane proton channel, linked together by a central stalk and a peripheral stalk. During catalysis, ATP synthesis in the catalytic domain of F(1) is coupled via a rotary mechanism of the central stalk subunits to proton translocation. Component of the F(0) channel, it forms part of the peripheral stalk, linking F(1) to F(0). The chain is ATP synthase subunit b, chloroplastic from Mesostigma viride (Green alga).